The sequence spans 72 residues: Large ribosomal subunit protein uL29 (72 aa).

It belongs to the universal ribosomal protein uL29 family.

The sequence is that of Large ribosomal subunit protein uL29 from Prochlorococcus marinus (strain MIT 9515).